The sequence spans 417 residues: UDP-N-acetylglucosamine 1-carboxyvinyltransferase (417 aa).

A phosphoenolpyruvate-binding site is contributed by 22 to 23; that stretch reads KN. Residue Arg-93 coordinates UDP-N-acetyl-alpha-D-glucosamine. The Proton donor role is filled by Cys-117. Residue Cys-117 is modified to 2-(S-cysteinyl)pyruvic acid O-phosphothioketal. UDP-N-acetyl-alpha-D-glucosamine is bound by residues 122–126, Asp-305, and Ile-327; that span reads RPVDQ.

It belongs to the EPSP synthase family. MurA subfamily.

It localises to the cytoplasm. The enzyme catalyses phosphoenolpyruvate + UDP-N-acetyl-alpha-D-glucosamine = UDP-N-acetyl-3-O-(1-carboxyvinyl)-alpha-D-glucosamine + phosphate. The protein operates within cell wall biogenesis; peptidoglycan biosynthesis. Functionally, cell wall formation. Adds enolpyruvyl to UDP-N-acetylglucosamine. The protein is UDP-N-acetylglucosamine 1-carboxyvinyltransferase of Nitrosomonas eutropha (strain DSM 101675 / C91 / Nm57).